The sequence spans 93 residues: Acylphosphatase (93 aa).

The Acylphosphatase-like domain maps to 7–93 (RLTAWVHGWV…TEQITGFSER (87 aa)). Residues R22 and N40 contribute to the active site.

It belongs to the acylphosphatase family.

It carries out the reaction an acyl phosphate + H2O = a carboxylate + phosphate + H(+). This is Acylphosphatase (acyP) from Mycobacterium tuberculosis (strain ATCC 25177 / H37Ra).